We begin with the raw amino-acid sequence, 190 residues long: ATP synthase subunit b (190 aa).

A helical transmembrane segment spans residues Leu-34 to Phe-54.

This sequence belongs to the ATPase B chain family. F-type ATPases have 2 components, F(1) - the catalytic core - and F(0) - the membrane proton channel. F(1) has five subunits: alpha(3), beta(3), gamma(1), delta(1), epsilon(1). F(0) has four main subunits: a(1), b(1), b'(1) and c(10-14). The alpha and beta chains form an alternating ring which encloses part of the gamma chain. F(1) is attached to F(0) by a central stalk formed by the gamma and epsilon chains, while a peripheral stalk is formed by the delta, b and b' chains.

Its subcellular location is the cellular thylakoid membrane. Functionally, f(1)F(0) ATP synthase produces ATP from ADP in the presence of a proton or sodium gradient. F-type ATPases consist of two structural domains, F(1) containing the extramembraneous catalytic core and F(0) containing the membrane proton channel, linked together by a central stalk and a peripheral stalk. During catalysis, ATP synthesis in the catalytic domain of F(1) is coupled via a rotary mechanism of the central stalk subunits to proton translocation. In terms of biological role, component of the F(0) channel, it forms part of the peripheral stalk, linking F(1) to F(0). This Nostoc punctiforme (strain ATCC 29133 / PCC 73102) protein is ATP synthase subunit b.